Reading from the N-terminus, the 501-residue chain is DNA nucleotidylexotransferase (501 aa).

A Nuclear localization signal motif is present at residues 11-17; it reads KKRKRPV. The BRCT domain maps to 24 to 121; that stretch reads QVEVKFKEVT…RPVRVETRHS (98 aa). Positions 249–253 are involved in DNA binding; that stretch reads VGPKT. Residues 324-329 and 333-336 each bind a 2'-deoxyribonucleoside 5'-triphosphate; these read GFRRGK and HDVD. 3 residues coordinate Mg(2+): aspartate 334, aspartate 336, and aspartate 426. Residue 441-442 participates in a 2'-deoxyribonucleoside 5'-triphosphate binding; the sequence is GW.

This sequence belongs to the DNA polymerase type-X family. It depends on Mg(2+) as a cofactor.

It is found in the nucleus. It carries out the reaction DNA(n) + a 2'-deoxyribonucleoside 5'-triphosphate = DNA(n+1) + diphosphate. Template-independent DNA polymerase which catalyzes the random addition of deoxynucleoside 5'-triphosphate to the 3'-end of a DNA initiator. One of the in vivo functions of this enzyme is the addition of nucleotides at the junction (N region) of rearranged Ig heavy chain and T-cell receptor gene segments during the maturation of B- and T-cells. The sequence is that of DNA nucleotidylexotransferase (dntt) from Oncorhynchus mykiss (Rainbow trout).